A 307-amino-acid chain; its full sequence is Inner spore coat protein H-like protein (307 aa).

This sequence belongs to the CotH family.

It is found in the spore coat. Functionally, involved in the assembly of several proteins in the inner and outer layer of the spore coat. This chain is Inner spore coat protein H-like protein (yisJ), found in Bacillus subtilis (strain 168).